The primary structure comprises 402 residues: Beta sliding clamp (402 aa).

The protein belongs to the beta sliding clamp family. Forms a ring-shaped head-to-tail homodimer around DNA which binds and tethers DNA polymerases and other proteins to the DNA. The DNA replisome complex has a single clamp-loading complex (3 tau and 1 each of delta, delta', psi and chi subunits) which binds 3 Pol III cores (1 core on the leading strand and 2 on the lagging strand) each with a beta sliding clamp dimer. Additional proteins in the replisome are other copies of gamma, psi and chi, Ssb, DNA helicase and RNA primase.

The protein localises to the cytoplasm. In terms of biological role, confers DNA tethering and processivity to DNA polymerases and other proteins. Acts as a clamp, forming a ring around DNA (a reaction catalyzed by the clamp-loading complex) which diffuses in an ATP-independent manner freely and bidirectionally along dsDNA. Initially characterized for its ability to contact the catalytic subunit of DNA polymerase III (Pol III), a complex, multichain enzyme responsible for most of the replicative synthesis in bacteria; Pol III exhibits 3'-5' exonuclease proofreading activity. The beta chain is required for initiation of replication as well as for processivity of DNA replication. The sequence is that of Beta sliding clamp (dnaN) from Mycobacterium tuberculosis (strain CDC 1551 / Oshkosh).